The primary structure comprises 146 residues: Large ribosomal subunit protein uL15 (146 aa).

Residues 1–13 (MKLHELHSAEGSR) are compositionally biased toward basic and acidic residues. Residues 1–55 (MKLHELHSAEGSRRNRKRVGRGTSSGYGKTSGRGQKGQLARQGGHTRLGFEGGQM) are disordered. A compositionally biased stretch (gly residues) spans 23-35 (TSSGYGKTSGRGQ).

It belongs to the universal ribosomal protein uL15 family. Part of the 50S ribosomal subunit.

Its function is as follows. Binds to the 23S rRNA. The chain is Large ribosomal subunit protein uL15 from Lactobacillus helveticus (strain DPC 4571).